Consider the following 895-residue polypeptide: Probable aminodeoxychorismate synthase, chloroplastic (895 aa).

Residues 1–45 (MAALRLPTPPPPRAPAPWLHSSHRRRVAAPRGAGGGGGGGGAVPP) form a disordered region. Residues 1–48 (MAALRLPTPPPPRAPAPWLHSSHRRRVAAPRGAGGGGGGGGAVPPPPV) constitute a chloroplast transit peptide. The segment covering 32-42 (GAGGGGGGGGA) has biased composition (gly residues). The region spanning 49 to 307 (RTLLIDNYDS…KKITTDFGLQ (259 aa)) is the Glutamine amidotransferase type-1 domain. The Nucleophile role is filled by Cys-135. Catalysis depends on residues His-281 and Glu-283. Positions 387–875 (IFSVLFGHHS…KAKAPTKVVE (489 aa)) are PABB component.

This sequence in the C-terminal section; belongs to the anthranilate synthase component I family.

The protein resides in the plastid. The protein localises to the chloroplast. The enzyme catalyses chorismate + L-glutamine = 4-amino-4-deoxychorismate + L-glutamate. It functions in the pathway cofactor biosynthesis; tetrahydrofolate biosynthesis; 4-aminobenzoate from chorismate: step 1/2. It participates in antibiotic biosynthesis; candicidin biosynthesis. Functionally, bifunctional enzyme that catalyzes the biosynthesis of 4-amino-4-deoxychorismate (ADC) from chorismate and glutamine. In the first step, a glutamine amidotransferase generates ammonia that is channelled between the binding sites of glutamine and chorismate and used along with chorismate in the second step, catalyzed by aminodeoxychorismate synthase, to produce ADC. Required for the synthesis of 4-aminobenzoate (PABA), an important component in tetrahydrofolate biosynthesis. Does not possess ADC lyase activity. This is Probable aminodeoxychorismate synthase, chloroplastic (ADCS) from Oryza sativa subsp. japonica (Rice).